The following is a 328-amino-acid chain: Aspartate carbamoyltransferase catalytic subunit (328 aa).

Residues R64 and T65 each contribute to the carbamoyl phosphate site. K92 provides a ligand contact to L-aspartate. The carbamoyl phosphate site is built by R114, H144, and Q147. R177 and R232 together coordinate L-aspartate. 2 residues coordinate carbamoyl phosphate: G273 and P274.

Belongs to the aspartate/ornithine carbamoyltransferase superfamily. ATCase family. Heterododecamer (2C3:3R2) of six catalytic PyrB chains organized as two trimers (C3), and six regulatory PyrI chains organized as three dimers (R2).

It catalyses the reaction carbamoyl phosphate + L-aspartate = N-carbamoyl-L-aspartate + phosphate + H(+). It functions in the pathway pyrimidine metabolism; UMP biosynthesis via de novo pathway; (S)-dihydroorotate from bicarbonate: step 2/3. In terms of biological role, catalyzes the condensation of carbamoyl phosphate and aspartate to form carbamoyl aspartate and inorganic phosphate, the committed step in the de novo pyrimidine nucleotide biosynthesis pathway. The chain is Aspartate carbamoyltransferase catalytic subunit from Halorhodospira halophila (strain DSM 244 / SL1) (Ectothiorhodospira halophila (strain DSM 244 / SL1)).